Consider the following 1016-residue polypeptide: Probable outer membrane protein PmpH (1016 aa).

The signal sequence occupies residues 1 to 24; the sequence is MPFSLRSTSFCFLACLCSYSYGFA. The Autotransporter domain occupies 697–1016; it reads GELVPNSLWV…FVSMGLNRIF (320 aa).

This sequence belongs to the PMP outer membrane protein family.

It localises to the secreted. It is found in the cell wall. The protein localises to the cell outer membrane. The polypeptide is Probable outer membrane protein PmpH (pmpH) (Chlamydia trachomatis serovar D (strain ATCC VR-885 / DSM 19411 / UW-3/Cx)).